The following is a 439-amino-acid chain: O-methyltransferase aurJ (439 aa).

An S-adenosyl-L-methionine-binding site is contributed by D283. The active-site Proton acceptor is the H338.

It belongs to the class I-like SAM-binding methyltransferase superfamily. Cation-independent O-methyltransferase family. COMT subfamily.

The catalysed reaction is norrubrofusarin + S-adenosyl-L-methionine = rubrofusarin + S-adenosyl-L-homocysteine + H(+). It functions in the pathway pigment biosynthesis. Functionally, O-methyltransferase; part of the gene cluster that mediates the biosynthesis of aurofusarin, a red mycelium pigment which is acting as a mycotoxin. The first step is performed by the polyketide synthase which condenses one acetyl-CoA and 6 malonyl-CoA units to form the first intermediate, the cyclic heptaketide and yellow pigment YWA1. The C2 hydroxyl group in the pyrone ring of YWA1 is probably formed during ring closure by an aldol-type cyclization reaction. The dehydratase aurZ then acts as the first tailoring enzyme in the aurofusarin biosynthetic pathway by converting YWA1 to nor-rubrofusarin. Nor-rubrofusarin is then methylated to rubrofusarin by the O-methyltransferase aurJ. Rubrofusarin is then transported across the plasma membrane by the rubrofusarin-specific pump aurT for further enzymatic processing by the extracellular complex composed of GIP1, aurF, aurO and aurS to yield aurofusarin. This Gibberella zeae (strain ATCC MYA-4620 / CBS 123657 / FGSC 9075 / NRRL 31084 / PH-1) (Wheat head blight fungus) protein is O-methyltransferase aurJ.